The following is a 284-amino-acid chain: ATP synthase gamma chain (284 aa).

This sequence belongs to the ATPase gamma chain family. As to quaternary structure, F-type ATPases have 2 components, CF(1) - the catalytic core - and CF(0) - the membrane proton channel. CF(1) has five subunits: alpha(3), beta(3), gamma(1), delta(1), epsilon(1). CF(0) has three main subunits: a, b and c.

It is found in the cell membrane. Functionally, produces ATP from ADP in the presence of a proton gradient across the membrane. The gamma chain is believed to be important in regulating ATPase activity and the flow of protons through the CF(0) complex. In Bacillus licheniformis (strain ATCC 14580 / DSM 13 / JCM 2505 / CCUG 7422 / NBRC 12200 / NCIMB 9375 / NCTC 10341 / NRRL NRS-1264 / Gibson 46), this protein is ATP synthase gamma chain.